We begin with the raw amino-acid sequence, 309 residues long: UPF0276 protein RB0508 (309 aa).

Belongs to the UPF0276 family.

This is UPF0276 protein RB0508 from Rhizobium meliloti (strain 1021) (Ensifer meliloti).